Here is a 37-residue protein sequence, read N- to C-terminus: MKVRASVRKICSKCQLIWRGKRLSVVCVNPRHKQKQG.

Belongs to the bacterial ribosomal protein bL36 family.

The protein localises to the plastid. The protein resides in the chloroplast. The sequence is that of Large ribosomal subunit protein bL36c from Gnetum parvifolium (Small-leaved jointfir).